Reading from the N-terminus, the 390-residue chain is Monomeric sarcosine oxidase (390 aa).

6 to 36 serves as a coordination point for FAD; sequence DVIVVGAGSMGMAAGYQLAKQGVKTLLVDAF. Position 316 is an S-8alpha-FAD cysteine (C316).

As to quaternary structure, monomer. FAD is required as a cofactor.

It localises to the cytoplasm. The catalysed reaction is sarcosine + O2 + H2O = formaldehyde + glycine + H2O2. With respect to regulation, pyrrole-2-carboxylate is a competitive inhibitor. N-(cyclopropyl)glycine (CPG) is a mechanism-based inhibitor and inactivates the enzyme by covalently modifying the flavin. Functionally, catalyzes the oxidative demethylation of sarcosine. Can also oxidize other secondary amino acids such as N-methyl-L-alanine. This Bacillus sp. (strain B-0618) protein is Monomeric sarcosine oxidase (soxA).